The chain runs to 351 residues: Probable protein phosphatase 2C 8 (351 aa).

The tract at residues 1-63 (MLEKESDLTA…REAEEDKPSF (63 aa)) is disordered. Residues 54–63 (REAEEDKPSF) show a composition bias toward basic and acidic residues. In terms of domain architecture, PPM-type phosphatase spans 74 to 348 (EADVAEDKGA…DNCTAIVIVF (275 aa)). Mn(2+) is bound by residues Asp114, Gly115, Asp295, and Asp339.

The protein belongs to the PP2C family. Mg(2+) is required as a cofactor. Requires Mn(2+) as cofactor.

The enzyme catalyses O-phospho-L-seryl-[protein] + H2O = L-seryl-[protein] + phosphate. It carries out the reaction O-phospho-L-threonyl-[protein] + H2O = L-threonyl-[protein] + phosphate. The protein is Probable protein phosphatase 2C 8 of Arabidopsis thaliana (Mouse-ear cress).